The primary structure comprises 865 residues: Alanine--tRNA ligase (865 aa).

The Zn(2+) site is built by His552, His556, Cys654, and His658.

This sequence belongs to the class-II aminoacyl-tRNA synthetase family. Zn(2+) is required as a cofactor.

It is found in the cytoplasm. The catalysed reaction is tRNA(Ala) + L-alanine + ATP = L-alanyl-tRNA(Ala) + AMP + diphosphate. Functionally, catalyzes the attachment of alanine to tRNA(Ala) in a two-step reaction: alanine is first activated by ATP to form Ala-AMP and then transferred to the acceptor end of tRNA(Ala). Also edits incorrectly charged Ser-tRNA(Ala) and Gly-tRNA(Ala) via its editing domain. The sequence is that of Alanine--tRNA ligase from Coxiella burnetii (strain Dugway 5J108-111).